Consider the following 513-residue polypeptide: Sugar transport protein MST8 (513 aa).

The Cytoplasmic portion of the chain corresponds to 1–17 (MAGGAMTDTDGAHKNYP). The chain crosses the membrane as a helical span at residues 18–38 (GKMTIFVFLACLVASSGGLIF). Residues 39-81 (GYDIGISGGVTSMDSFLIKFFPSVYAKEKEMVETNQYCKFDSE) lie on the Extracellular side of the membrane. Residues 82–102 (LLTLFTSSLYLAALIASLFAS) traverse the membrane as a helical segment. The Cytoplasmic segment spans residues 103–116 (VITRKFGRRITMLG). The chain crosses the membrane as a helical span at residues 117-137 (GGVIFLVGAILNGAAADVAML). The Extracellular portion of the chain corresponds to 138–139 (II). A helical membrane pass occupies residues 140–160 (GRILLGIGVGFSNQAVPLYLS). The Cytoplasmic segment spans residues 161 to 166 (EMAPAR). The helical transmembrane segment at 167 to 187 (MRGMLNISFQLMITVGILAAN) threads the bilayer. Residues 188–201 (LINYFTDKIAGGWG) are Extracellular-facing. The chain crosses the membrane as a helical span at residues 202 to 222 (WRVSLGLAAVPAVIMAGGSLF). Residues 223–294 (LPDTPNSLLS…LVMSVLIPTL (72 aa)) lie on the Cytoplasmic side of the membrane. A helical membrane pass occupies residues 295–315 (QQLTGINVVMFYAPVLFKTIG). Over 316-320 (FGGTA) the chain is Extracellular. A helical transmembrane segment spans residues 321 to 341 (SLMSAVITGLVNMFATFVSIA). Topologically, residues 342-347 (TVDRLG) are cytoplasmic. The helical transmembrane segment at 348 to 368 (RRKLLLQGGVQMIFAQFILGT) threads the bilayer. The Extracellular portion of the chain corresponds to 369–385 (LIAVKFGTAGVANISRG). Residues 386-406 (YAIVVVLCICVFVSAFAWSWG) traverse the membrane as a helical segment. Over 407–425 (PLGWLVPSEIFPLEIRSAA) the chain is Cytoplasmic. A helical transmembrane segment spans residues 426–446 (QSVVVVFNMAFTFIIAQIFLM). Residues 447–450 (MLCH) lie on the Extracellular side of the membrane. Residues 451 to 471 (LKFGLFYFFGAMELIMTGFVF) form a helical membrane-spanning segment. The Cytoplasmic portion of the chain corresponds to 472–512 (FFLPETKGIPIEEMDRIWGKHWYWRRFVGAGAGGKVEITST).

The protein belongs to the major facilitator superfamily. Sugar transporter (TC 2.A.1.1) family. In terms of tissue distribution, expressed specifically in anthers.

The protein resides in the membrane. Its function is as follows. Mediates active uptake of hexoses by sugar:proton symport. May play an important role in transporting monosaccharides during anther development. The protein is Sugar transport protein MST8 of Oryza sativa subsp. japonica (Rice).